The following is a 321-amino-acid chain: Glucokinase (321 aa).

Residue 9–14 participates in ATP binding; sequence ADIGGT.

Belongs to the bacterial glucokinase family.

The protein resides in the cytoplasm. The enzyme catalyses D-glucose + ATP = D-glucose 6-phosphate + ADP + H(+). This Saccharophagus degradans (strain 2-40 / ATCC 43961 / DSM 17024) protein is Glucokinase.